Reading from the N-terminus, the 375-residue chain is Probable serine/threonine-protein kinase PBL28 (375 aa).

Thr65 is subject to Phosphothreonine. In terms of domain architecture, Protein kinase spans 76–356 (FSDENLLGKG…MDCVKELQLI (281 aa)). Residues 82–90 (LGKGGFGRV) and Lys104 contribute to the ATP site. Tyr152 carries the post-translational modification Phosphotyrosine. The Proton acceptor role is filled by Asp205. Residue Thr245 is modified to Phosphothreonine. The residue at position 253 (Tyr253) is a Phosphotyrosine.

This sequence belongs to the protein kinase superfamily. Ser/Thr protein kinase family.

It localises to the cell membrane. The enzyme catalyses L-seryl-[protein] + ATP = O-phospho-L-seryl-[protein] + ADP + H(+). It carries out the reaction L-threonyl-[protein] + ATP = O-phospho-L-threonyl-[protein] + ADP + H(+). May be involved in plant defense signaling. In Arabidopsis thaliana (Mouse-ear cress), this protein is Probable serine/threonine-protein kinase PBL28.